The chain runs to 77 residues: Protein AC43 (77 aa).

Its function is as follows. Plays a role in the production of occlusion bodies as well as expression of the polyhedrin gene. This is Protein AC43 from Autographa californica nuclear polyhedrosis virus (AcMNPV).